The primary structure comprises 96 residues: Small ribosomal subunit protein bS20 (96 aa).

Belongs to the bacterial ribosomal protein bS20 family.

Functionally, binds directly to 16S ribosomal RNA. The chain is Small ribosomal subunit protein bS20 from Thermotoga petrophila (strain ATCC BAA-488 / DSM 13995 / JCM 10881 / RKU-1).